We begin with the raw amino-acid sequence, 631 residues long: PTS system glucosamine-specific EIICBA component (631 aa).

One can recognise a PTS EIIC type-1 domain in the interval 3–382; it reads KKAFQILQQL…WNLKTPGRET (380 aa). 8 consecutive transmembrane segments (helical) span residues 12–32, 56–76, 106–126, 149–169, 196–216, 243–263, 298–318, and 350–370; these read LGRALMTPVAVLPAAGLLLRF, LIFAVGVAIGLAGGEGVAGLA, HLIDMGVFGGIIIGLLAAYLY, IITSVSSLVIGVIFSFVWPLI, LLIPFGLHHIFYTPFYFMMGE, FMMGDFPYMIFCLPAVALAII, FLFVAPVLYLINSILAGVIFV, and VVIPVGIVFAFIYYYLFRFAI. The PTS EIIB type-1 domain occupies 397–478; that stretch reads DQLAFHVLQA…KTIMAGGVPA (82 aa). Cys419 (phosphocysteine intermediate; for EIIB activity) is an active-site residue. Cys419 is subject to Phosphocysteine. Positions 515 to 619 constitute a PTS EIIA type-1 domain; that stretch reads DQVFSEKMMG…SAITPVIFTN (105 aa). His567 serves as the catalytic Tele-phosphohistidine intermediate; for EIIA activity. His567 is subject to Phosphohistidine.

The protein resides in the cell membrane. It carries out the reaction D-glucosamine(out) + N(pros)-phospho-L-histidyl-[protein] = D-glucosamine 6-phosphate(in) + L-histidyl-[protein]. The phosphoenolpyruvate-dependent sugar phosphotransferase system (sugar PTS), a major carbohydrate active transport system, catalyzes the phosphorylation of incoming sugar substrates concomitantly with their translocation across the cell membrane. This system is involved in glucosamine transport. In vitro, when expressed in the absence of GamR and NagP, can transport N-acetylglucosamine. Functionally, in addition, plays an important role in the phosphorylation of EIIA-deficient PTS transporters. The EIIA domain can transfer a phosphoryl group to EIIA-deficient PTS transporters, enabling growth with maltose, N-acetylglucosamine, sucrose or trehalose as the sole carbon source. This Bacillus subtilis (strain 168) protein is PTS system glucosamine-specific EIICBA component.